The following is a 369-amino-acid chain: Sesquiterpene cyclase hepA (369 aa).

Residues aspartate 100, asparagine 248, serine 252, and aspartate 256 each coordinate Mg(2+). Residues 100–104 carry the DDXXD motif motif; that stretch reads DDEID. The (N,D)D(L,I,V)X(S,T)XXXE motif signature appears at 255-262; the sequence is NDLLSLRK.

It belongs to the terpene synthase family. Requires Mg(2+) as cofactor.

Its function is as follows. Sesquiterpene cyclase; part of the gene cluster that mediates the biosynthesis of heptelidic acid (HA), a sesquiterpene lactone that acts as an inhibitor of glyceraldehyde-3-phosphatedehydrogenase (GAPDH) and a growth inhibitor of the salt-tolerant lactic acid bacteria in soy sauce brewing. The chain is Sesquiterpene cyclase hepA from Aspergillus oryzae (strain ATCC 42149 / RIB 40) (Yellow koji mold).